A 522-amino-acid chain; its full sequence is Serine/threonine-protein kinase pak-2 (522 aa).

A CRIB domain is found at 16 to 29 (ISTPSNFEHRIHAG). Residues 183–204 (TTTPQLQPKSPSTPQAMRQQPK) show a composition bias toward polar residues. The disordered stretch occupies residues 183 to 208 (TTTPQLQPKSPSTPQAMRQQPKCTEG). The Protein kinase domain maps to 231-482 (LTDYKQIGEG…AKDLLRHPFF (252 aa)). ATP contacts are provided by residues 237–245 (IGEGSTGVV) and Lys-260. Asp-350 serves as the catalytic Proton acceptor.

This sequence belongs to the protein kinase superfamily. STE Ser/Thr protein kinase family. STE20 subfamily. Mg(2+) is required as a cofactor. It depends on Mn(2+) as a cofactor. Expressed in pharynx, vulva and spermatheca. Unlike other p21-activated kinases, expression is not detected in neurons.

It carries out the reaction L-seryl-[protein] + ATP = O-phospho-L-seryl-[protein] + ADP + H(+). The enzyme catalyses L-threonyl-[protein] + ATP = O-phospho-L-threonyl-[protein] + ADP + H(+). In terms of biological role, serine/threonine-protein kinase which plays a redundant role with pak-1 in embryogenesis but, in contrast to pak-1, is not involved in commissural axon guidance of ventral cord motoneurons or in distal tip cell (DTC) migration. This Caenorhabditis elegans protein is Serine/threonine-protein kinase pak-2.